The sequence spans 533 residues: Beta-1,4 N-acetylgalactosaminyltransferase 1 (533 aa).

At 1–7 the chain is on the cytoplasmic side; the sequence is MRLDRRA. A helical; Signal-anchor for type II membrane protein transmembrane segment spans residues 8 to 25; it reads LYALVLLLACASLGLLYS. Topologically, residues 26–533 are lumenal; that stretch reads STRNAPSLPN…KHRLQCMTAE (508 aa). Asparagine 79, asparagine 179, and asparagine 274 each carry an N-linked (GlcNAc...) asparagine glycan. The cysteines at positions 429 and 476 are disulfide-linked.

This sequence belongs to the glycosyltransferase 2 family. Homodimer; disulfide-linked. In terms of tissue distribution, most abundant in brain, liver, lung, spleen and testis.

The protein resides in the golgi apparatus membrane. It carries out the reaction a ganglioside GM3 (d18:1(4E)) + UDP-N-acetyl-alpha-D-galactosamine = a ganglioside GM2 (d18:1(4E)) + UDP + H(+). It catalyses the reaction a ganglioside GD3 (d18:1(4E)) + UDP-N-acetyl-alpha-D-galactosamine = a ganglioside GD2 (d18:1(4E)) + UDP + H(+). The enzyme catalyses a ganglioside GM3 + UDP-N-acetyl-alpha-D-galactosamine = a ganglioside GM2 + UDP + H(+). The catalysed reaction is a ganglioside GD3 + UDP-N-acetyl-alpha-D-galactosamine = a ganglioside GD2 + UDP + H(+). It carries out the reaction a ganglioside GD1a + UDP-N-acetyl-alpha-D-galactosamine = a ganglioside GalNAc-GD1a + UDP + H(+). It catalyses the reaction a ganglioside GT3 (d18:1(4E)) + UDP-N-acetyl-alpha-D-galactosamine = a ganglioside GT2 (d18:1(4E)) + UDP + H(+). The enzyme catalyses a beta-D-Gal-(1-&gt;4)-beta-D-Glc-(1&lt;-&gt;1)-Cer(d18:1(4E)) + UDP-N-acetyl-alpha-D-galactosamine = a ganglioside GA2 (d18:1(4E)) + UDP + H(+). The catalysed reaction is a neolactoside IV(3)-alpha-NeuGc-nLc4Cer + UDP-N-acetyl-alpha-D-galactosamine = a neolactoside IV(4)-beta-GalNAc-IV(3)-alpha-NeuGc-nLc4Cer + UDP + H(+). It functions in the pathway sphingolipid metabolism. Functionally, involved in the biosynthesis of gangliosides GM2, GD2 and GA2. Involved in the biosynthesis of gangliosides GM2, GD2, GT2 and GA2 from GM3, GD3, GT3 and GA3, respectively. The polypeptide is Beta-1,4 N-acetylgalactosaminyltransferase 1 (Mus musculus (Mouse)).